Here is a 977-residue protein sequence, read N- to C-terminus: Zinc finger CCCH domain-containing protein 7B (977 aa).

3 TPR repeats span residues 1–27 (MERQ…KQEE), 36–69 (VQNL…ADYA), and 82–115 (CKLH…DSES). Residue Ser217 is modified to Phosphoserine. The LD motif; interaction with NSP3 signature appears at 248-256 (STDSLDDFS). 2 positions are modified to phosphoserine: Ser364 and Ser367. The tract at residues 365 to 403 (FGSTRGSLDKPDSFMEETNSQDHRPPSGAQKPAPSPEPC) is disordered. 3 C3H1-type zinc fingers span residues 484 to 508 (LCKD…HQEE), 616 to 638 (VCRH…HSFI), and 754 to 782 (PQQY…HSPE). The C2H2-type zinc finger occupies 842 to 866 (YHCWLCGKNSNSKKQWQQHIQSEKH). The C3H1-type 4 zinc finger occupies 886-914 (MGEFRLCDRLQKGKACPDGDKCRCAHGQE).

(Microbial infection) Interacts (via LD motif) with rotavirus A NSP3 (via the coiled-coil region).

It is found in the nucleus. Its function is as follows. May be a specific regulator of miRNA biogenesis. Binds to microRNAs MIR7-1, MIR16-2 and MIR29A hairpins recognizing the 'ATA(A/T)' motif in the apical loop. The polypeptide is Zinc finger CCCH domain-containing protein 7B (ZC3H7B) (Homo sapiens (Human)).